Here is a 333-residue protein sequence, read N- to C-terminus: Tetraacyldisaccharide 4'-kinase (333 aa).

Residue 60–67 (TVGGTGKT) participates in ATP binding.

This sequence belongs to the LpxK family.

It carries out the reaction a lipid A disaccharide + ATP = a lipid IVA + ADP + H(+). It participates in glycolipid biosynthesis; lipid IV(A) biosynthesis; lipid IV(A) from (3R)-3-hydroxytetradecanoyl-[acyl-carrier-protein] and UDP-N-acetyl-alpha-D-glucosamine: step 6/6. Its function is as follows. Transfers the gamma-phosphate of ATP to the 4'-position of a tetraacyldisaccharide 1-phosphate intermediate (termed DS-1-P) to form tetraacyldisaccharide 1,4'-bis-phosphate (lipid IVA). The protein is Tetraacyldisaccharide 4'-kinase of Azotobacter vinelandii (strain DJ / ATCC BAA-1303).